We begin with the raw amino-acid sequence, 165 residues long: Trypsin alpha-3 (165 aa).

The 163-residue stretch at 1 to 163 (NSGGVLVSVA…LRSWVVSAAN (163 aa)) folds into the Peptidase S1 domain. D26 acts as the Charge relay system in catalysis. 2 disulfides stabilise this stretch: C89-C106 and C115-C139. S119 functions as the Charge relay system in the catalytic mechanism.

The protein belongs to the peptidase S1 family.

The protein localises to the secreted. Its subcellular location is the extracellular space. The catalysed reaction is Preferential cleavage: Arg-|-Xaa, Lys-|-Xaa.. In Lucilia cuprina (Green bottle fly), this protein is Trypsin alpha-3.